The primary structure comprises 325 residues: RepFIB replication protein A (325 aa).

The interval 279–298 (APNDESKENPLPPSPAEKVS) is disordered.

It belongs to the initiator RepB protein family.

Its function is as follows. This protein is essential for plasmid replication; it is involved in copy control functions. In vitro, binds to the DNA repeat units, BCDD'D'', EFG and HIJ. The sequence is that of RepFIB replication protein A (repA) from Escherichia coli.